Consider the following 331-residue polypeptide: Nucleotide sugar transporter SLC35B4 (331 aa).

The next 11 helical transmembrane spans lie at 4 to 24 (ALAV…LELL), 30 to 50 (GCGN…GFLF), 59 to 79 (PAIP…VSVV), 92 to 112 (LHMI…IIIL), 117 to 137 (SIFK…CTFM), 153 to 173 (GFQA…ALLM), 201 to 221 (ALPL…AVLF), 229 to 249 (IPVI…NIIT), 251 to 267 (YVCI…CASL), 268 to 288 (TVTL…ILYF), and 291 to 311 (PFTL…LMYT). The Mediates endoplasmic reticulum retention motif lies at 326–331 (KDSKKN).

The protein belongs to the nucleotide-sugar transporter family. SLC35B subfamily.

It is found in the endoplasmic reticulum membrane. The enzyme catalyses UDP-N-acetyl-alpha-D-glucosamine(in) + UDP-alpha-D-glucuronate(out) = UDP-N-acetyl-alpha-D-glucosamine(out) + UDP-alpha-D-glucuronate(in). The catalysed reaction is UDP-alpha-D-xylose(in) + UDP-alpha-D-glucuronate(out) = UDP-alpha-D-xylose(out) + UDP-alpha-D-glucuronate(in). Functionally, antiporter that transports nucleotide sugars across the endoplasmic reticulum (ER) membrane in exchange for another nucleotide sugar. May couple UDP-alpha-D-glucuronate (UDP-GlcA) or UDP-alpha-D-xylose (UDP-Xyl) efflux to UDP-alpha-D-glucuronate (UDP-GlcA) influx into the ER lumen, which in turn stimulates glucuronidation and excretion of endobiotics and xenobiotics. Has UDP-GlcA:UDP-GlcNAc antiporter activity. The protein is Nucleotide sugar transporter SLC35B4 (SLC35B4) of Homo sapiens (Human).